Here is a 345-residue protein sequence, read N- to C-terminus: Large ribosomal subunit protein uL10 (345 aa).

The interval 303-345 is disordered; sequence SLPQTAAPQQTPQPTEAPKEEAQEEKKEGPSEEEIAGSLASLF. The span at 305–318 shows a compositional bias: low complexity; that stretch reads PQTAAPQQTPQPTE. Positions 319 to 332 are enriched in basic and acidic residues; the sequence is APKEEAQEEKKEGP.

This sequence belongs to the universal ribosomal protein uL10 family. As to quaternary structure, part of the 50S ribosomal subunit. Forms part of the ribosomal stalk which helps the ribosome interact with GTP-bound translation factors. Forms a heptameric L10(L12)2(L12)2(L12)2 complex, where L10 forms an elongated spine to which the L12 dimers bind in a sequential fashion.

In terms of biological role, forms part of the ribosomal stalk, playing a central role in the interaction of the ribosome with GTP-bound translation factors. This is Large ribosomal subunit protein uL10 from Pyrobaculum aerophilum (strain ATCC 51768 / DSM 7523 / JCM 9630 / CIP 104966 / NBRC 100827 / IM2).